Reading from the N-terminus, the 233-residue chain is Large ribosomal subunit protein uL3 (233 aa).

The tract at residues 146–171 (GSQRASHGNSRSHRVPGSIGQAQDPG) is disordered. The residue at position 168 (Gln168) is an N5-methylglutamine.

Belongs to the universal ribosomal protein uL3 family. As to quaternary structure, part of the 50S ribosomal subunit. Forms a cluster with proteins L14 and L19. Post-translationally, methylated by PrmB.

Functionally, one of the primary rRNA binding proteins, it binds directly near the 3'-end of the 23S rRNA, where it nucleates assembly of the 50S subunit. The sequence is that of Large ribosomal subunit protein uL3 from Bordetella bronchiseptica (strain ATCC BAA-588 / NCTC 13252 / RB50) (Alcaligenes bronchisepticus).